The chain runs to 159 residues: 3-hydroxyacyl-[acyl-carrier-protein] dehydratase FabZ (159 aa).

Residue His-58 is part of the active site.

It belongs to the thioester dehydratase family. FabZ subfamily.

The protein localises to the cytoplasm. It carries out the reaction a (3R)-hydroxyacyl-[ACP] = a (2E)-enoyl-[ACP] + H2O. Its function is as follows. Involved in unsaturated fatty acids biosynthesis. Catalyzes the dehydration of short chain beta-hydroxyacyl-ACPs and long chain saturated and unsaturated beta-hydroxyacyl-ACPs. The polypeptide is 3-hydroxyacyl-[acyl-carrier-protein] dehydratase FabZ (Helicobacter pylori (strain Shi470)).